The sequence spans 276 residues: 2-dehydro-3-deoxyphosphooctonate aldolase (276 aa).

It belongs to the KdsA family.

The protein localises to the cytoplasm. The catalysed reaction is D-arabinose 5-phosphate + phosphoenolpyruvate + H2O = 3-deoxy-alpha-D-manno-2-octulosonate-8-phosphate + phosphate. It participates in carbohydrate biosynthesis; 3-deoxy-D-manno-octulosonate biosynthesis; 3-deoxy-D-manno-octulosonate from D-ribulose 5-phosphate: step 2/3. The protein operates within bacterial outer membrane biogenesis; lipopolysaccharide biosynthesis. The polypeptide is 2-dehydro-3-deoxyphosphooctonate aldolase (Xanthomonas oryzae pv. oryzae (strain MAFF 311018)).